We begin with the raw amino-acid sequence, 442 residues long: Putative protein YjbI (442 aa).

The sequence is that of Putative protein YjbI (yjbI) from Escherichia coli (strain K12).